Here is a 236-residue protein sequence, read N- to C-terminus: MSDIVSISSARPRLLVSVRGPDEALTALRAGADLIDAKDPERGALGALPPETVRAIVAGVGGRAVTSAVAGDGTGREIAAAIATIAATGVDFIKIAVGGADDAALAEAAAQAPGRVIGVLFAEDDVAEDGPARLAAAGFVGAMIDTRGKSGTTLTSLMAAPQLAAFVAGCRTHGLMSGLAGSLGLGDIPVLARLDPDYLGFRGGLCRASDRRQALDGARVAQAVEAMRAGPRADAA.

The Schiff-base intermediate with substrate role is filled by Lys38. The active-site Proton acceptor is the Lys94.

This sequence belongs to the MfnB family.

The catalysed reaction is 2 D-glyceraldehyde 3-phosphate = 4-(hydroxymethyl)-2-furancarboxaldehyde phosphate + phosphate + 2 H2O. Functionally, catalyzes the formation of 4-(hydroxymethyl)-2-furancarboxaldehyde phosphate (4-HFC-P) from two molecules of glyceraldehyde-3-P (GA-3-P). The protein is Putative (5-formylfuran-3-yl)methyl phosphate synthase of Methylorubrum extorquens (Methylobacterium dichloromethanicum).